The primary structure comprises 36 residues: MTAESMLANGAFIMIGLTLLGLAWGFVIIKLQGSEE.

The chain crosses the membrane as a helical span at residues 9–29 (NGAFIMIGLTLLGLAWGFVII).

It belongs to the PetM family. In terms of assembly, the 4 large subunits of the cytochrome b6-f complex are cytochrome b6, subunit IV (17 kDa polypeptide, PetD), cytochrome f and the Rieske protein, while the 4 small subunits are PetG, PetL, PetM and PetN. The complex functions as a dimer.

The protein resides in the cellular thylakoid membrane. Component of the cytochrome b6-f complex, which mediates electron transfer between photosystem II (PSII) and photosystem I (PSI), cyclic electron flow around PSI, and state transitions. The protein is Cytochrome b6-f complex subunit 7 of Synechocystis sp. (strain ATCC 27184 / PCC 6803 / Kazusa).